The chain runs to 416 residues: Serine hydroxymethyltransferase (416 aa).

Residues L121 and 125-127 (GHL) contribute to the (6S)-5,6,7,8-tetrahydrofolate site. K230 bears the N6-(pyridoxal phosphate)lysine mark.

Belongs to the SHMT family. Homodimer. The cofactor is pyridoxal 5'-phosphate.

It localises to the cytoplasm. It carries out the reaction (6R)-5,10-methylene-5,6,7,8-tetrahydrofolate + glycine + H2O = (6S)-5,6,7,8-tetrahydrofolate + L-serine. It participates in one-carbon metabolism; tetrahydrofolate interconversion. The protein operates within amino-acid biosynthesis; glycine biosynthesis; glycine from L-serine: step 1/1. In terms of biological role, catalyzes the reversible interconversion of serine and glycine with tetrahydrofolate (THF) serving as the one-carbon carrier. This reaction serves as the major source of one-carbon groups required for the biosynthesis of purines, thymidylate, methionine, and other important biomolecules. Also exhibits THF-independent aldolase activity toward beta-hydroxyamino acids, producing glycine and aldehydes, via a retro-aldol mechanism. This is Serine hydroxymethyltransferase from Nitrosomonas europaea (strain ATCC 19718 / CIP 103999 / KCTC 2705 / NBRC 14298).